The following is a 539-amino-acid chain: O-phosphoserine--tRNA(Cys) ligase (539 aa).

Residues 188–190 (HMT), 233–235 (SAS), 275–276 (YY), and Asn327 each bind substrate.

Belongs to the class-II aminoacyl-tRNA synthetase family. O-phosphoseryl-tRNA(Cys) synthetase subfamily. Homotetramer. Interacts with SepCysS.

The catalysed reaction is tRNA(Cys) + O-phospho-L-serine + ATP = O-phospho-L-seryl-tRNA(Cys) + AMP + diphosphate. In terms of biological role, catalyzes the attachment of O-phosphoserine (Sep) to tRNA(Cys). In Methanococcoides burtonii (strain DSM 6242 / NBRC 107633 / OCM 468 / ACE-M), this protein is O-phosphoserine--tRNA(Cys) ligase.